Consider the following 30-residue polypeptide: Cyclotide hyen-H (30 aa).

Residues 1–30 (KIPCGESCVYIPCISSVLGCSCSNKVCYKD) constitute a cross-link (cyclopeptide (Lys-Asp)). Disulfide bonds link Cys4–Cys20, Cys8–Cys22, and Cys13–Cys27.

This is a cyclic peptide. In terms of tissue distribution, detected in stems (at protein level).

Its function is as follows. Probably participates in a plant defense mechanism. In Pigea enneasperma (Spade flower), this protein is Cyclotide hyen-H.